The chain runs to 271 residues: 4-hydroxy-tetrahydrodipicolinate reductase (271 aa).

NAD(+) contacts are provided by residues 10–15 (GAGGRM), E36, 100–102 (GTT), and 124–127 (SGNM). H157 acts as the Proton donor/acceptor in catalysis. (S)-2,3,4,5-tetrahydrodipicolinate is bound at residue H158. K161 acts as the Proton donor in catalysis. 167–168 (GT) serves as a coordination point for (S)-2,3,4,5-tetrahydrodipicolinate.

The protein belongs to the DapB family.

It is found in the cytoplasm. The enzyme catalyses (S)-2,3,4,5-tetrahydrodipicolinate + NAD(+) + H2O = (2S,4S)-4-hydroxy-2,3,4,5-tetrahydrodipicolinate + NADH + H(+). It carries out the reaction (S)-2,3,4,5-tetrahydrodipicolinate + NADP(+) + H2O = (2S,4S)-4-hydroxy-2,3,4,5-tetrahydrodipicolinate + NADPH + H(+). It functions in the pathway amino-acid biosynthesis; L-lysine biosynthesis via DAP pathway; (S)-tetrahydrodipicolinate from L-aspartate: step 4/4. In terms of biological role, catalyzes the conversion of 4-hydroxy-tetrahydrodipicolinate (HTPA) to tetrahydrodipicolinate. The polypeptide is 4-hydroxy-tetrahydrodipicolinate reductase (Rhodopseudomonas palustris (strain HaA2)).